A 235-amino-acid polypeptide reads, in one-letter code: Carboxy-S-adenosyl-L-methionine synthase (235 aa).

Residues Tyr-35, 60-62 (GCS), 83-84 (DN), Asn-124, and Arg-191 each bind S-adenosyl-L-methionine.

This sequence belongs to the class I-like SAM-binding methyltransferase superfamily. Cx-SAM synthase family. In terms of assembly, homodimer.

It catalyses the reaction prephenate + S-adenosyl-L-methionine = carboxy-S-adenosyl-L-methionine + 3-phenylpyruvate + H2O. Functionally, catalyzes the conversion of S-adenosyl-L-methionine (SAM) to carboxy-S-adenosyl-L-methionine (Cx-SAM). In Campylobacter jejuni subsp. jejuni serotype O:6 (strain 81116 / NCTC 11828), this protein is Carboxy-S-adenosyl-L-methionine synthase.